Reading from the N-terminus, the 534-residue chain is Cysteine/serine-rich nuclear protein 2 (534 aa).

Methionine 1 carries the N-acetylmethionine modification. Disordered stretches follow at residues 1–52 (MDAF…FTPT) and 480–534 (DCGL…PLAV). Residues 31 to 40 (SSDSADSCDS) are compositionally biased toward low complexity. Positions 42-52 (NPPTTASFTPT) are enriched in polar residues. Basic and acidic residues predominate over residues 480–492 (DCGLKEPESEDLH).

Belongs to the AXUD1 family. Highest expression detected in thymus, brain and ovary. Low levels detected in naive T-cells.

The protein resides in the nucleus. Binds to the consensus sequence 5'-AGAGTG-3' and has transcriptional activator activity. May play a role in apoptosis. This Mus musculus (Mouse) protein is Cysteine/serine-rich nuclear protein 2 (Csrnp2).